A 469-amino-acid polypeptide reads, in one-letter code: Light-independent protochlorophyllide reductase subunit N (469 aa).

[4Fe-4S] cluster contacts are provided by cysteine 24, cysteine 49, and cysteine 109.

This sequence belongs to the BchN/ChlN family. In terms of assembly, protochlorophyllide reductase is composed of three subunits; ChlL, ChlN and ChlB. Forms a heterotetramer of two ChlB and two ChlN subunits. The cofactor is [4Fe-4S] cluster.

The catalysed reaction is chlorophyllide a + oxidized 2[4Fe-4S]-[ferredoxin] + 2 ADP + 2 phosphate = protochlorophyllide a + reduced 2[4Fe-4S]-[ferredoxin] + 2 ATP + 2 H2O. The protein operates within porphyrin-containing compound metabolism; chlorophyll biosynthesis (light-independent). Component of the dark-operative protochlorophyllide reductase (DPOR) that uses Mg-ATP and reduced ferredoxin to reduce ring D of protochlorophyllide (Pchlide) to form chlorophyllide a (Chlide). This reaction is light-independent. The NB-protein (ChlN-ChlB) is the catalytic component of the complex. The sequence is that of Light-independent protochlorophyllide reductase subunit N from Gloeobacter violaceus (strain ATCC 29082 / PCC 7421).